A 205-amino-acid chain; its full sequence is Small ribosomal subunit protein uS4 (205 aa).

Residues 94-157 (SRLDTVVYRM…QQIPLIQESI (64 aa)) form the S4 RNA-binding domain.

It belongs to the universal ribosomal protein uS4 family. In terms of assembly, part of the 30S ribosomal subunit. Contacts protein S5. The interaction surface between S4 and S5 is involved in control of translational fidelity.

In terms of biological role, one of the primary rRNA binding proteins, it binds directly to 16S rRNA where it nucleates assembly of the body of the 30S subunit. Functionally, with S5 and S12 plays an important role in translational accuracy. The sequence is that of Small ribosomal subunit protein uS4 from Rickettsia prowazekii (strain Madrid E).